The following is a 415-amino-acid chain: MDGNENPNPARTSLWRNARLATLREELGPLGIIEDGVIAVRGERIVYAGPEAGLPSELARADQVFDCEGRWVTPALIDCHTHIVHGGNRAREFQLRLEGATYEEIARAGGGIASTVEATNALSVEALVEAALPRLDTLLAEGVSTVEVKSGYGLNVEAELKMLRAARRLESLRPVRIVTSYLAAHATPPEFRGRNGDYIAEVVLPGLTAAHAEGLADAVDGFCEGIAFSPAEIASVFGRAKSLGLPVKLHAEQLSDLGGAKLAASYGALSADHLEYLDAAGAAAMAKAGTVAVLLPGAFYTLREKQLPPVEALREAGTRIAIATDCNPGTSPLTSLLLTLNMSATLFRLTLEECLAGVTREAARALGILGETGTIEAGKSADLAIWNIDQPAELIYRIGFNPLRERIFKGERILR.

Fe(3+)-binding residues include H80 and H82. Residues H80 and H82 each coordinate Zn(2+). Residues R89, Y152, and H185 each coordinate 4-imidazolone-5-propanoate. An N-formimidoyl-L-glutamate-binding site is contributed by Y152. H250 is a binding site for Fe(3+). H250 provides a ligand contact to Zn(2+). Q253 provides a ligand contact to 4-imidazolone-5-propanoate. Residue D325 coordinates Fe(3+). A Zn(2+)-binding site is contributed by D325. The N-formimidoyl-L-glutamate site is built by N327 and G329. 4-imidazolone-5-propanoate is bound at residue T330.

It belongs to the metallo-dependent hydrolases superfamily. HutI family. The cofactor is Zn(2+). It depends on Fe(3+) as a cofactor.

The protein resides in the cytoplasm. It carries out the reaction 4-imidazolone-5-propanoate + H2O = N-formimidoyl-L-glutamate. It functions in the pathway amino-acid degradation; L-histidine degradation into L-glutamate; N-formimidoyl-L-glutamate from L-histidine: step 3/3. Catalyzes the hydrolytic cleavage of the carbon-nitrogen bond in imidazolone-5-propanoate to yield N-formimidoyl-L-glutamate. It is the third step in the universal histidine degradation pathway. This Rhizobium meliloti (strain 1021) (Ensifer meliloti) protein is Imidazolonepropionase.